We begin with the raw amino-acid sequence, 277 residues long: Nickel import ATP-binding protein NikE (277 aa).

Residues 14 to 253 form the ABC transporter domain; that stretch reads YRTVSLVGRS…EHPASRALQR (240 aa). Residue 46-53 coordinates ATP; sequence GRSGSGKS.

It belongs to the ABC transporter superfamily. Nickel importer (TC 3.A.1.5.3) family. In terms of assembly, the complex is composed of two ATP-binding proteins (NikD and NikE), two transmembrane proteins (NikB and NikC) and a solute-binding protein (NikA).

It localises to the cell inner membrane. It carries out the reaction Ni(2+)(out) + ATP + H2O = Ni(2+)(in) + ADP + phosphate + H(+). Part of the ABC transporter complex NikABCDE involved in nickel import. Responsible for energy coupling to the transport system. The sequence is that of Nickel import ATP-binding protein NikE from Rhodospirillum rubrum (strain ATCC 11170 / ATH 1.1.1 / DSM 467 / LMG 4362 / NCIMB 8255 / S1).